An 846-amino-acid polypeptide reads, in one-letter code: uncharacterized protein (846 aa).

6 WD repeats span residues 88–129, 132–172, 175–215, 219–258, 262–309, and 313–348; these read TKHI…LLYD, EHSR…STIT, GNSE…LPFL, AHNG…KKSL, NNVS…IPYR, and CHDS…NAFN. The segment at 541 to 560 is disordered; the sequence is PREASTPSESSNSSIESEDN. The segment covering 544 to 555 has biased composition (low complexity); sequence ASTPSESSNSSI. The WD 7 repeat unit spans residues 624 to 663; that stretch reads FHRSSVTSASIKSREAVLSAGNSSRRASIFLDQLSLHGDT.

This is an uncharacterized protein from Schizosaccharomyces pombe (strain 972 / ATCC 24843) (Fission yeast).